We begin with the raw amino-acid sequence, 383 residues long: 8-amino-7-oxononanoate synthase (383 aa).

Residue Arg-20 participates in substrate binding. 107–108 (GY) contributes to the pyridoxal 5'-phosphate binding site. His-132 lines the substrate pocket. Residues Ser-178, His-206, and Thr-233 each contribute to the pyridoxal 5'-phosphate site. Lys-236 carries the N6-(pyridoxal phosphate)lysine modification. Thr-349 lines the substrate pocket.

This sequence belongs to the class-II pyridoxal-phosphate-dependent aminotransferase family. BioF subfamily. Homodimer. Pyridoxal 5'-phosphate is required as a cofactor.

The enzyme catalyses 6-carboxyhexanoyl-[ACP] + L-alanine + H(+) = (8S)-8-amino-7-oxononanoate + holo-[ACP] + CO2. Its pathway is cofactor biosynthesis; biotin biosynthesis. Catalyzes the decarboxylative condensation of pimeloyl-[acyl-carrier protein] and L-alanine to produce 8-amino-7-oxononanoate (AON), [acyl-carrier protein], and carbon dioxide. This Chromobacterium violaceum (strain ATCC 12472 / DSM 30191 / JCM 1249 / CCUG 213 / NBRC 12614 / NCIMB 9131 / NCTC 9757 / MK) protein is 8-amino-7-oxononanoate synthase.